The chain runs to 548 residues: MIVWQALFVVYCLFTTSIHGLFQDFNPFANKNISLKFPSLNRWEKNVMATGQQTIINSDSIYEWTPILSNITAGKKDSFVFTIDAEASGYGFAPTYEVLMFISGNICQMPMNRSDVDLTIYYSFNETVLENPNIGQSAVFQDGYIQALAISPVQSSSSNATSTYSNLYVVAELVNSTTEQPLSSSDASENWEYRLSISENDLVFQWDVRPWVEVLDTDMNSALLSTGNVTADAKVYHNYSIYDPSLYDLYVYSYEDSVQLNQNYNLSLCAVKNGPYLVSSQNTSNATVTSNSTNPLERTDLAIQKKITEYGGSVTEMFYVTGLNASTTYVAYLTKKISNGDGLSSVGGILFSHVYFTTRSTDVCSLIFGLDFCSDVAYSVPTSSFSVGNKTLMAQTYDHIAEALYANFSKALQLISCDADKDARYSPVMTCDDCAEAYRDWVCAVSIPRCTTTSSQYYIHRDKSHNRNDYLNKFIKPLDDYYEILPCIDMCYTLVRNCPSDFQFSCPNDLTTEDLLYQSYNFYMDTDYSTCNYIGNSSLMVIHPLDDT.

The N-terminal stretch at 1 to 20 is a signal peptide; that stretch reads MIVWQALFVVYCLFTTSIHG. At 21–341 the chain is on the extracellular side; sequence LFQDFNPFAN…YLTKKISNGD (321 aa). N-linked (GlcNAc...) asparagine glycans are attached at residues N32, N70, N112, N125, N159, N175, N228, N238, N265, N282, N285, N291, and N324. Residues 342-358 traverse the membrane as a helical segment; it reads GLSSVGGILFSHVYFTT. Topologically, residues 359–548 are cytoplasmic; the sequence is RSTDVCSLIF…LMVIHPLDDT (190 aa).

In terms of assembly, forms an oligomer with a molecular mass of 200 kDa by disulfide bonds. Interacts with CCH1 to form a Ca(2+) influx channel. N-glycosylated.

It is found in the cell membrane. Functionally, calcium-permeable, cation-selective stretch-activated channel (SAC) that functions together with CCH1 to mediate calcium entry into cells. Required during mating. Together with CCH1, essential for tolerance to iron stress, which leads to an increased oxidative poise, and to cold stress. This chain is Stretch-activated cation channel MID1 (MID1), found in Saccharomyces cerevisiae (strain ATCC 204508 / S288c) (Baker's yeast).